The following is a 707-amino-acid chain: Polyribonucleotide nucleotidyltransferase (707 aa).

The Mg(2+) site is built by Asp-485 and Asp-491. A KH domain is found at 552-611 (PRIHTMKINSDKIKDVIGKGGAVIRALTEETGTTIEIEDDGTIKIAATEGAAAKEAIRRI). One can recognise an S1 motif domain in the interval 621–689 (GRIYTGKVMR…RQGRIRLSMK (69 aa)).

The protein belongs to the polyribonucleotide nucleotidyltransferase family. As to quaternary structure, component of the RNA degradosome, which is a multiprotein complex involved in RNA processing and mRNA degradation. The cofactor is Mg(2+).

It localises to the cytoplasm. The catalysed reaction is RNA(n+1) + phosphate = RNA(n) + a ribonucleoside 5'-diphosphate. In terms of biological role, involved in mRNA degradation. Catalyzes the phosphorolysis of single-stranded polyribonucleotides processively in the 3'- to 5'-direction. This Photobacterium profundum (strain SS9) protein is Polyribonucleotide nucleotidyltransferase.